Here is an 82-residue protein sequence, read N- to C-terminus: Sec-independent protein translocase protein TatA (82 aa).

A helical transmembrane segment spans residues 1 to 21 (MGIFDWKHWIVILIVVVLVFG). Residues 43–82 (VNTEEDDKKEQPAAQPAQPLNQPHTIDAQAQKVEEPARKD) form a disordered region.

It belongs to the TatA/E family. As to quaternary structure, the Tat system comprises two distinct complexes: a TatABC complex, containing multiple copies of TatA, TatB and TatC subunits, and a separate TatA complex, containing only TatA subunits. Substrates initially bind to the TatABC complex, which probably triggers association of the separate TatA complex to form the active translocon.

Its subcellular location is the cell inner membrane. Part of the twin-arginine translocation (Tat) system that transports large folded proteins containing a characteristic twin-arginine motif in their signal peptide across membranes. TatA could form the protein-conducting channel of the Tat system. The sequence is that of Sec-independent protein translocase protein TatA from Pseudomonas paraeruginosa (strain DSM 24068 / PA7) (Pseudomonas aeruginosa (strain PA7)).